Consider the following 189-residue polypeptide: Small ribosomal subunit protein uS5 (189 aa).

The region spanning 22 to 85 is the S5 DRBM domain; sequence FVDKLVAINR…EAAKRELIFV (64 aa).

This sequence belongs to the universal ribosomal protein uS5 family. In terms of assembly, part of the 30S ribosomal subunit. Contacts proteins S4 and S8.

In terms of biological role, with S4 and S12 plays an important role in translational accuracy. Functionally, located at the back of the 30S subunit body where it stabilizes the conformation of the head with respect to the body. This chain is Small ribosomal subunit protein uS5, found in Rhizobium etli (strain CIAT 652).